Reading from the N-terminus, the 648-residue chain is Bifunctional lysine-specific demethylase and histidyl-hydroxylase NO66 (648 aa).

Residues 1 to 168 (MSKVSSIFDT…KGAKAAKKNK (168 aa)) are disordered. The segment covering 17–28 (PATTENGAAAKP) has biased composition (low complexity). The segment covering 109 to 119 (DHRKHKEKLRK) has biased composition (basic residues). The span at 123-137 (GVENSRQAAASTSML) shows a compositional bias: polar residues. A compositionally biased stretch (basic residues) spans 155–168 (PVHHKGAKAAKKNK). One can recognise a JmjC domain in the interval 308–453 (CSIRMLNPQT…DLLELYLPHA (146 aa)). 3 residues coordinate Fe cation: His354, Asp356, and His419.

The protein belongs to the ROX family. NO66 subfamily. The cofactor is Fe(2+).

It is found in the nucleus. The enzyme catalyses N(6),N(6)-dimethyl-L-lysyl(36)-[histone H3] + 2 2-oxoglutarate + 2 O2 = L-lysyl(36)-[histone H3] + 2 formaldehyde + 2 succinate + 2 CO2. Its function is as follows. Oxygenase that can act as both a histone lysine demethylase and a ribosomal histidine hydroxylase. Specifically demethylates 'Lys-4' (H3K4me) and 'Lys-36' (H3K36me) of histone H3, thereby playing a central role in histone code. The protein is Bifunctional lysine-specific demethylase and histidyl-hydroxylase NO66 of Culex quinquefasciatus (Southern house mosquito).